Consider the following 232-residue polypeptide: Transcriptional regulatory protein CpxR (232 aa).

In terms of domain architecture, Response regulatory spans 3–115 (KILLVDDDRE…ELVARIRAIL (113 aa)). D51 carries the post-translational modification 4-aspartylphosphate. Residues 131-230 (SPTLEVDALV…LRGRGYLMVS (100 aa)) constitute a DNA-binding region (ompR/PhoB-type).

Phosphorylated by CpxA.

It localises to the cytoplasm. In terms of biological role, member of the two-component regulatory system CpxA/CpxR. This system combats a variety of extracytoplasmic protein-mediated toxicities. It performs this function by increasing the synthesis of the periplasmic protease, DegP as well as that of CpxP protein. The sequence is that of Transcriptional regulatory protein CpxR (cpxR) from Escherichia coli O157:H7.